Reading from the N-terminus, the 532-residue chain is CTP synthase (532 aa).

Positions 1-267 (MAKFVFVTGG…HGLVLDQLQI (267 aa)) are amidoligase domain. A CTP-binding site is contributed by Ser13. Ser13 is a UTP binding site. ATP is bound at residue 14–19 (GLGKGI). Tyr54 contacts L-glutamine. Residue Asp71 coordinates ATP. Residues Asp71 and Glu141 each contribute to the Mg(2+) site. CTP-binding positions include 148 to 150 (DIE), 188 to 193 (KTKPIQ), and Lys224. UTP contacts are provided by residues 188–193 (KTKPIQ) and Lys224. Positions 292-532 (EVTFVGKYIE…GFVEAIVNNK (241 aa)) constitute a Glutamine amidotransferase type-1 domain. An L-glutamine-binding site is contributed by Gly354. The Nucleophile; for glutamine hydrolysis role is filled by Cys381. L-glutamine contacts are provided by residues 382–385 (LGMQ), Glu405, and Arg462. Active-site residues include His507 and Glu509.

The protein belongs to the CTP synthase family. Homotetramer.

The catalysed reaction is UTP + L-glutamine + ATP + H2O = CTP + L-glutamate + ADP + phosphate + 2 H(+). It carries out the reaction L-glutamine + H2O = L-glutamate + NH4(+). The enzyme catalyses UTP + NH4(+) + ATP = CTP + ADP + phosphate + 2 H(+). It participates in pyrimidine metabolism; CTP biosynthesis via de novo pathway; CTP from UDP: step 2/2. Its activity is regulated as follows. Allosterically activated by GTP, when glutamine is the substrate; GTP has no effect on the reaction when ammonia is the substrate. The allosteric effector GTP functions by stabilizing the protein conformation that binds the tetrahedral intermediate(s) formed during glutamine hydrolysis. Inhibited by the product CTP, via allosteric rather than competitive inhibition. Catalyzes the ATP-dependent amination of UTP to CTP with either L-glutamine or ammonia as the source of nitrogen. Regulates intracellular CTP levels through interactions with the four ribonucleotide triphosphates. The protein is CTP synthase of Mesoplasma florum (strain ATCC 33453 / NBRC 100688 / NCTC 11704 / L1) (Acholeplasma florum).